The sequence spans 439 residues: Nuclear distribution protein PAC1 (439 aa).

Residues 55–90 are a coiled coil; it reads NSIVRLQSKIMELEKNCEELQKSIDEQQSSTNQISN. WD repeat units lie at residues 106 to 145, 149 to 193, 199 to 240, 243 to 282, 295 to 335, 355 to 392, and 402 to 438; these read TLDA…LPLQ, AHMD…TLSH, GHEH…CIKS, PHTQ…SMGI, IPDP…FIPH, DHNS…LSTT, and NKGF…TSFM.

It belongs to the WD repeat LIS1/nudF family. Self-associates. Interacts with NDL1 and dynein.

It is found in the cytoplasm. The protein localises to the cytoskeleton. The protein resides in the spindle pole. Its function is as follows. Positively regulates the activity of the minus-end directed microtubule motor protein dynein. Plays a central role in positioning the mitotic spindle at the bud neck during cell division. Targets cytoplasmic dynein to microtubule plus ends, thereby promoting dynein-mediated microtubule sliding along the bud cortex and consequently the movement of the mitotic spindle to the bud neck. This chain is Nuclear distribution protein PAC1, found in Kluyveromyces lactis (strain ATCC 8585 / CBS 2359 / DSM 70799 / NBRC 1267 / NRRL Y-1140 / WM37) (Yeast).